Reading from the N-terminus, the 179-residue chain is Large ribosomal subunit protein uL6c (179 aa).

This sequence belongs to the universal ribosomal protein uL6 family. Part of the 50S ribosomal subunit.

It localises to the plastid. The protein localises to the chloroplast. Binds 23S rRNA. This Trieres chinensis (Marine centric diatom) protein is Large ribosomal subunit protein uL6c (rpl6).